A 458-amino-acid polypeptide reads, in one-letter code: UDP-N-acetylglucosamine 1-carboxyvinyltransferase (458 aa).

Phosphoenolpyruvate is bound at residue 34–35; it reads KN. R104 serves as a coordination point for UDP-N-acetyl-alpha-D-glucosamine. The active-site Proton donor is C128. C128 carries the 2-(S-cysteinyl)pyruvic acid O-phosphothioketal modification. UDP-N-acetyl-alpha-D-glucosamine contacts are provided by D320 and V342.

This sequence belongs to the EPSP synthase family. MurA subfamily.

The protein resides in the cytoplasm. The catalysed reaction is phosphoenolpyruvate + UDP-N-acetyl-alpha-D-glucosamine = UDP-N-acetyl-3-O-(1-carboxyvinyl)-alpha-D-glucosamine + phosphate. It participates in cell wall biogenesis; peptidoglycan biosynthesis. In terms of biological role, cell wall formation. Adds enolpyruvyl to UDP-N-acetylglucosamine. This Prochlorococcus marinus (strain NATL2A) protein is UDP-N-acetylglucosamine 1-carboxyvinyltransferase.